Consider the following 196-residue polypeptide: Imidazoleglycerol-phosphate dehydratase (196 aa).

The protein belongs to the imidazoleglycerol-phosphate dehydratase family.

It localises to the cytoplasm. The catalysed reaction is D-erythro-1-(imidazol-4-yl)glycerol 3-phosphate = 3-(imidazol-4-yl)-2-oxopropyl phosphate + H2O. It functions in the pathway amino-acid biosynthesis; L-histidine biosynthesis; L-histidine from 5-phospho-alpha-D-ribose 1-diphosphate: step 6/9. This is Imidazoleglycerol-phosphate dehydratase from Clostridium novyi (strain NT).